The primary structure comprises 75 residues: uncharacterized protein (75 aa).

The signal sequence occupies residues 1-26; that stretch reads MQFLERHFSVLFPVLFFFSFYPISFA.

It is found in the secreted. This is an uncharacterized protein from Schizosaccharomyces pombe (strain 972 / ATCC 24843) (Fission yeast).